Here is a 377-residue protein sequence, read N- to C-terminus: Carbamoyl phosphate synthase small chain (377 aa).

A CPSase region spans residues 1 to 186 (MSTPALLVLA…LGKGFVTPDE (186 aa)). Residues Ser-47, Gly-238, and Gly-240 each contribute to the L-glutamine site. Residues 190 to 377 (HVVAYDFGVK…IGNMKAAKRA (188 aa)) enclose the Glutamine amidotransferase type-1 domain. The Nucleophile role is filled by Cys-266. Residues Leu-267, Gln-270, Asn-308, Gly-310, and Phe-311 each contribute to the L-glutamine site. Active-site residues include His-350 and Glu-352.

The protein belongs to the CarA family. In terms of assembly, composed of two chains; the small (or glutamine) chain promotes the hydrolysis of glutamine to ammonia, which is used by the large (or ammonia) chain to synthesize carbamoyl phosphate. Tetramer of heterodimers (alpha,beta)4.

The enzyme catalyses hydrogencarbonate + L-glutamine + 2 ATP + H2O = carbamoyl phosphate + L-glutamate + 2 ADP + phosphate + 2 H(+). It catalyses the reaction L-glutamine + H2O = L-glutamate + NH4(+). The protein operates within amino-acid biosynthesis; L-arginine biosynthesis; carbamoyl phosphate from bicarbonate: step 1/1. Its pathway is pyrimidine metabolism; UMP biosynthesis via de novo pathway; (S)-dihydroorotate from bicarbonate: step 1/3. In terms of biological role, small subunit of the glutamine-dependent carbamoyl phosphate synthetase (CPSase). CPSase catalyzes the formation of carbamoyl phosphate from the ammonia moiety of glutamine, carbonate, and phosphate donated by ATP, constituting the first step of 2 biosynthetic pathways, one leading to arginine and/or urea and the other to pyrimidine nucleotides. The small subunit (glutamine amidotransferase) binds and cleaves glutamine to supply the large subunit with the substrate ammonia. The polypeptide is Carbamoyl phosphate synthase small chain (Neisseria meningitidis serogroup A / serotype 4A (strain DSM 15465 / Z2491)).